We begin with the raw amino-acid sequence, 343 residues long: Nuclease EXOG, mitochondrial (343 aa).

His121 acts as the Proton acceptor in catalysis. Asn152 provides a ligand contact to a divalent metal cation.

Belongs to the DNA/RNA non-specific endonuclease family. As to quaternary structure, homodimer. A divalent metal cation serves as cofactor.

The protein resides in the mitochondrion inner membrane. Functionally, endo/exonuclease with nicking activity towards supercoiled DNA, a preference for single-stranded DNA and 5'-3' exonuclease activity. This Danio rerio (Zebrafish) protein is Nuclease EXOG, mitochondrial (exog).